The following is a 239-amino-acid chain: tRNA (guanine-N(7)-)-methyltransferase (239 aa).

Positions 69, 94, 121, and 144 each coordinate S-adenosyl-L-methionine. Residue Asp-144 is part of the active site. Lys-148 is a substrate binding site. Residues 150-155 (RHNKRR) form an interaction with RNA region. Substrate contacts are provided by residues Asp-180 and 217-220 (TKFE).

The protein belongs to the class I-like SAM-binding methyltransferase superfamily. TrmB family. As to quaternary structure, monomer.

The enzyme catalyses guanosine(46) in tRNA + S-adenosyl-L-methionine = N(7)-methylguanosine(46) in tRNA + S-adenosyl-L-homocysteine. It functions in the pathway tRNA modification; N(7)-methylguanine-tRNA biosynthesis. In terms of biological role, catalyzes the formation of N(7)-methylguanine at position 46 (m7G46) in tRNA. In Shigella flexneri serotype 5b (strain 8401), this protein is tRNA (guanine-N(7)-)-methyltransferase.